The sequence spans 616 residues: Nucleoprotein (616 aa).

Short sequence motifs (nuclear localization signal) lie at residues 230–233 (RPKR) and 473–476 (KPKK).

As to quaternary structure, homomultimerizes to form the nucleocapsid. Binds to viral genomic RNA. Protein-RNA contacts are mediated by a combination of electrostatic interactions between positively charged residues and the phosphate backbone and planar interactions between aromatic side chains and bases.

It localises to the virion. The protein resides in the host nucleus. Its subcellular location is the host nucleolus. Functionally, encapsidates the negative strand viral RNA, protecting it from nucleases. The encapsidated genomic RNA is termed the ribonucleoprotein (RNP) and serves as template for transcription and replication. This is Nucleoprotein from Gadus morhua (Atlantic cod).